Reading from the N-terminus, the 1088-residue chain is DNA polymerase delta catalytic subunit (1088 aa).

The protein belongs to the DNA polymerase type-B family. As to quaternary structure, heterodimer with subunits of 125 kDa and 50 kDa. The 125 kDa subunit contains the polymerase active site and most likely the active site for the 3'-5' exonuclease activity.

The protein resides in the nucleus. The enzyme catalyses DNA(n) + a 2'-deoxyribonucleoside 5'-triphosphate = DNA(n+1) + diphosphate. Functionally, this polymerase possesses two enzymatic activities: DNA synthesis (polymerase) and an exonucleolytic activity that degrades single-stranded DNA in the 3'- to 5'-direction. This chain is DNA polymerase delta catalytic subunit (POLD1), found in Glycine max (Soybean).